A 310-amino-acid polypeptide reads, in one-letter code: Ribosomal RNA small subunit methyltransferase H (310 aa).

S-adenosyl-L-methionine contacts are provided by residues 33 to 35, aspartate 52, phenylalanine 79, aspartate 98, and glutamine 105; that span reads GGH.

This sequence belongs to the methyltransferase superfamily. RsmH family.

The protein resides in the cytoplasm. The enzyme catalyses cytidine(1402) in 16S rRNA + S-adenosyl-L-methionine = N(4)-methylcytidine(1402) in 16S rRNA + S-adenosyl-L-homocysteine + H(+). Functionally, specifically methylates the N4 position of cytidine in position 1402 (C1402) of 16S rRNA. The protein is Ribosomal RNA small subunit methyltransferase H of Campylobacter jejuni subsp. doylei (strain ATCC BAA-1458 / RM4099 / 269.97).